The sequence spans 412 residues: Phosphoglycerate kinase (412 aa).

Residues 26–28, Arg-42, 65–68, Arg-133, and Arg-166 each bind substrate; these read DFN and HLGR. Residues Lys-217, Gly-308, Glu-339, and 368–371 each bind ATP; that span reads GGDS.

This sequence belongs to the phosphoglycerate kinase family. In terms of assembly, monomer.

The protein localises to the cytoplasm. The enzyme catalyses (2R)-3-phosphoglycerate + ATP = (2R)-3-phospho-glyceroyl phosphate + ADP. Its pathway is carbohydrate degradation; glycolysis; pyruvate from D-glyceraldehyde 3-phosphate: step 2/5. The chain is Phosphoglycerate kinase from Synechococcus sp. (strain JA-3-3Ab) (Cyanobacteria bacterium Yellowstone A-Prime).